The sequence spans 638 residues: Chaperone protein DnaK (638 aa).

Phosphothreonine; by autocatalysis is present on Thr197. Residues 598-638 (QQSAPSGAAAGPDEGAPSGSGGTSGTRGGDDVIDAEFTETK) form a disordered region. Residues 615–624 (SGSGGTSGTR) are compositionally biased toward gly residues. The span at 628–638 (DVIDAEFTETK) shows a compositional bias: acidic residues.

This sequence belongs to the heat shock protein 70 family.

Its function is as follows. Acts as a chaperone. The protein is Chaperone protein DnaK of Gloeobacter violaceus (strain ATCC 29082 / PCC 7421).